The sequence spans 398 residues: Serine/threonine-protein phosphatase 4 regulatory subunit 2-B (398 aa).

The tract at residues 138–398 (SSEKNTSPSL…NAPEEPMEQD (261 aa)) is disordered. Polar residues-rich tracts occupy residues 139-149 (SEKNTSPSLNR), 156-170 (PSNSQSYTDRSNVNG), and 183-193 (TLSSPMNTNGL). Positions 197–211 (MENKESDLQQKEKSL) are enriched in basic and acidic residues. Residues 278-294 (ASTSADKGKESCQTAQT) show a composition bias toward polar residues. A compositionally biased stretch (low complexity) spans 338–366 (SESACSLNSEEPNSAAAAASTAGTDSSEG).

It belongs to the PPP4R2 family. Serine/threonine-protein phosphatase 4 (PP4) occurs in different assemblies of the catalytic and one or more regulatory subunits.

Regulatory subunit of serine/threonine-protein phosphatase 4 (PP4). The protein is Serine/threonine-protein phosphatase 4 regulatory subunit 2-B (ppp4r2-b) of Xenopus laevis (African clawed frog).